The chain runs to 96 residues: Large ribosomal subunit protein uL23 (96 aa).

It belongs to the universal ribosomal protein uL23 family. Part of the 50S ribosomal subunit. Contacts protein L29, and trigger factor when it is bound to the ribosome.

Functionally, one of the early assembly proteins it binds 23S rRNA. One of the proteins that surrounds the polypeptide exit tunnel on the outside of the ribosome. Forms the main docking site for trigger factor binding to the ribosome. In Endomicrobium trichonymphae, this protein is Large ribosomal subunit protein uL23.